Here is a 137-residue protein sequence, read N- to C-terminus: Small ribosomal subunit protein uS19 (137 aa).

Residues 115–137 are disordered; sequence RNRVSHGSAGVGATRSSKFVPLK.

Belongs to the universal ribosomal protein uS19 family.

In terms of biological role, protein S19 forms a complex with S13 that binds strongly to the 16S ribosomal RNA. The protein is Small ribosomal subunit protein uS19 of Methanococcoides burtonii (strain DSM 6242 / NBRC 107633 / OCM 468 / ACE-M).